The following is a 445-amino-acid chain: tRNA modification GTPase MnmE (445 aa).

R20, E79, and K119 together coordinate (6S)-5-formyl-5,6,7,8-tetrahydrofolate. Residues 215–371 (GLKLAIIGPP…ILKNIENIAE (157 aa)) enclose the TrmE-type G domain. A K(+)-binding site is contributed by N225. GTP contacts are provided by residues 225–230 (NTGKSS), 244–250 (SNIAGTT), and 269–272 (DTAG). Residue S229 participates in Mg(2+) binding. Residues S244, I246, and T249 each coordinate K(+). T250 serves as a coordination point for Mg(2+). K445 serves as a coordination point for (6S)-5-formyl-5,6,7,8-tetrahydrofolate.

This sequence belongs to the TRAFAC class TrmE-Era-EngA-EngB-Septin-like GTPase superfamily. TrmE GTPase family. Homodimer. Heterotetramer of two MnmE and two MnmG subunits. It depends on K(+) as a cofactor.

It is found in the cytoplasm. In terms of biological role, exhibits a very high intrinsic GTPase hydrolysis rate. Involved in the addition of a carboxymethylaminomethyl (cmnm) group at the wobble position (U34) of certain tRNAs, forming tRNA-cmnm(5)s(2)U34. The polypeptide is tRNA modification GTPase MnmE (Rickettsia typhi (strain ATCC VR-144 / Wilmington)).